A 440-amino-acid chain; its full sequence is Tyrosine--tRNA ligase (440 aa).

Y46 provides a ligand contact to L-tyrosine. The short motif at 51-60 (PTAASLHIGN) is the 'HIGH' region element. Positions 181 and 185 each coordinate L-tyrosine. A 'KMSKS' region motif is present at residues 241-245 (KFGKS). Residue K244 participates in ATP binding. In terms of domain architecture, S4 RNA-binding spans 373-439 (DRVIDAAQAA…GKKALGAVEN (67 aa)).

It belongs to the class-I aminoacyl-tRNA synthetase family. TyrS type 1 subfamily. Homodimer.

It localises to the cytoplasm. The enzyme catalyses tRNA(Tyr) + L-tyrosine + ATP = L-tyrosyl-tRNA(Tyr) + AMP + diphosphate + H(+). In terms of biological role, catalyzes the attachment of tyrosine to tRNA(Tyr) in a two-step reaction: tyrosine is first activated by ATP to form Tyr-AMP and then transferred to the acceptor end of tRNA(Tyr). This Bifidobacterium longum (strain NCC 2705) protein is Tyrosine--tRNA ligase.